The sequence spans 240 residues: Probable hydroxyacylglutathione hydrolase (240 aa).

Positions 33, 35, 37, 38, 95, and 119 each coordinate Zn(2+). Residues arginine 128, 158 to 160 (HEY), and 234 to 237 (REEK) contribute to the substrate site. Histidine 158 provides a ligand contact to Zn(2+).

The protein belongs to the metallo-beta-lactamase superfamily. Glyoxalase II family. It depends on Zn(2+) as a cofactor.

The enzyme catalyses an S-(2-hydroxyacyl)glutathione + H2O = a 2-hydroxy carboxylate + glutathione + H(+). The protein operates within secondary metabolite metabolism; methylglyoxal degradation; (R)-lactate from methylglyoxal: step 2/2. Functionally, thiolesterase that catalyzes the hydrolysis of S-D-lactoyl-glutathione to form glutathione and D-lactic acid. The sequence is that of Probable hydroxyacylglutathione hydrolase from Schistosoma mansoni (Blood fluke).